A 557-amino-acid chain; its full sequence is Protein Red (557 aa).

The interval 1–90 (MPERDSEPFS…YAKLRQQEIE (90 aa)) is disordered. Basic and acidic residues predominate over residues 16–25 (DGHDVDDPHS). Residues 42-53 (TPRAAPTSAPPS) are compositionally biased toward low complexity. Residues Lys-98 and Lys-137 each carry the N6-acetyllysine modification. Lys-151 is covalently cross-linked (Glycyl lysine isopeptide (Lys-Gly) (interchain with G-Cter in SUMO2)). Residues 181–205 (KEKEEEELMEKPQKETKKDEDPENK) are disordered. Ser-287 is modified (phosphoserine). The segment covering 294–303 (RNKKLKKKDK) has biased composition (basic residues). Residues 294–402 (RNKKLKKKDK…PMDVDKGPGS (109 aa)) are disordered. The segment covering 304–313 (GKLEEKKPPE) has biased composition (basic and acidic residues). Glycyl lysine isopeptide (Lys-Gly) (interchain with G-Cter in SUMO2) cross-links involve residues Lys-310 and Lys-331. Over residues 332–398 (TPRDKERERY…VDDEPMDVDK (67 aa)) the composition is skewed to basic and acidic residues. A run of 17 repeats spans residues 342 to 343 (RE), 344 to 345 (RE), 346 to 347 (RD), 348 to 349 (RE), 350 to 351 (RD), 352 to 353 (RD), 354 to 355 (RE), 356 to 357 (RD), 358 to 359 (RE), 360 to 361 (RD), 362 to 363 (RE), 364 to 365 (RE), 366 to 367 (RE), 368 to 369 (RD), 370 to 371 (RE), 372 to 373 (RE), and 374 to 375 (RE). Residues 342-375 (RERERDRERDRDRERDRERDRERERERDRERERE) are 17 X 2 AA tandem repeats of R-[ED]. Glycyl lysine isopeptide (Lys-Gly) (interchain with G-Cter in SUMO2) cross-links involve residues Lys-386, Lys-388, Lys-404, and Lys-408. 2 positions are modified to phosphoserine: Ser-417 and Ser-460. At Thr-485 the chain carries Phosphothreonine. Residues Lys-496, Lys-501, and Lys-509 each participate in a glycyl lysine isopeptide (Lys-Gly) (interchain with G-Cter in SUMO2) cross-link. Ser-536 carries the post-translational modification Phosphoserine. Residues Lys-541, Lys-543, Lys-544, and Lys-553 each participate in a glycyl lysine isopeptide (Lys-Gly) (interchain with G-Cter in SUMO2) cross-link.

The protein belongs to the RED family. Component of the spliceosome B complex. Interacts with SMU1. Interacts with MAD1L1. May interact with DHX15.

Its subcellular location is the nucleus. It is found in the nucleoplasm. It localises to the chromosome. The protein resides in the cytoplasm. The protein localises to the cytoskeleton. Its subcellular location is the spindle pole. Its function is as follows. Involved in pre-mRNA splicing as a component of the spliceosome. Auxiliary spliceosomal protein that regulates selection of alternative splice sites in a small set of target pre-mRNA species. Required for normal mitotic cell cycle progression. Recruits MAD1L1 and MAD2L1 to kinetochores, and is required to trigger the spindle assembly checkpoint. Required for normal accumulation of SMU1. This is Protein Red (Ik) from Rattus norvegicus (Rat).